The following is a 295-amino-acid chain: Small ribosomal subunit protein uS2 (295 aa).

Serine 2 is subject to N-acetylserine. Serine 43 carries the post-translational modification Phosphoserine. Lysine 52 is subject to N6-acetyllysine. The tract at residues 54-113 is interaction with PPP1R16B; sequence TWEKLLLAARAIVAIENPADVSVISSRNTGQRAVLKFAAATGATPIAGRFTPGTFTNQIQ. Lysine 89 is modified (N6-acetyllysine; alternate). A Glycyl lysine isopeptide (Lys-Gly) (interchain with G-Cter in SUMO2); alternate cross-link involves residue lysine 89. Threonine 97 is subject to Phosphothreonine. Laminin-binding regions lie at residues 161 to 180 and 205 to 229; these read IPCNNKGAHSVGLMWWMLAR and RDPEEIEKEEQAAAEKAVTKEEFQG. [DE]-W-[ST] repeat units follow at residues 230-232, 247-249, 266-268, 275-277, and 293-295; these read EWT, DWS, and EWS. Positions 242–295 are laminin-binding; it reads QPEVADWSEGVQVPSVPIQQFPTEDWSAQPATEDWSAAPTAQATEWVGATTEWS. The segment at 266 to 295 is disordered; that stretch reads DWSAQPATEDWSAAPTAQATEWVGATTEWS.

It belongs to the universal ribosomal protein uS2 family. Monomer (37LRP) and homodimer (67LR). Component of the small ribosomal subunit. Mature ribosomes consist of a small (40S) and a large (60S) subunit. The 40S subunit contains about 33 different proteins and 1 molecule of RNA (18S). The 60S subunit contains about 49 different proteins and 3 molecules of RNA (28S, 5.8S and 5S). Interacts with RPS21. Interacts with several laminins including at least LAMB1. Interacts with MDK. The mature dimeric form interacts with PPP1R16B (via its fourth ankyrin repeat). Interacts with PPP1CA only in the presence of PPP1R16B. Acylated. Acylation may be a prerequisite for conversion of the monomeric 37 kDa laminin receptor precursor (37LRP) to the mature dimeric 67 kDa laminin receptor (67LR), and may provide a mechanism for membrane association. In terms of processing, cleaved by stromelysin-3 (ST3) at the cell surface. Cleavage by stromelysin-3 may be a mechanism to alter cell-extracellular matrix interactions. In terms of tissue distribution, expressed in most neurons and in a subset of glial cells. The overall distribution of LR correlates with that reported for laminin-1 but also with brain regions classically associated with prion-related neurodegeneration.

The protein localises to the cell membrane. The protein resides in the cytoplasm. Its subcellular location is the nucleus. Required for the assembly and/or stability of the 40S ribosomal subunit. Required for the processing of the 20S rRNA-precursor to mature 18S rRNA in a late step of the maturation of 40S ribosomal subunits. Also functions as a cell surface receptor for laminin. Plays a role in cell adhesion to the basement membrane and in the consequent activation of signaling transduction pathways. May play a role in cell fate determination and tissue morphogenesis. Also acts as a receptor for several other ligands, including the pathogenic prion protein, viruses, and bacteria. Acts as a PPP1R16B-dependent substrate of PPP1CA. In Rattus norvegicus (Rat), this protein is Small ribosomal subunit protein uS2 (Rpsa).